The chain runs to 289 residues: MFEGVIPAMVTPFKEDFSVDYEGIAKNLDYLEKHVNALVPAGTTGEAATLSYEEHIDVVRYVAETSKLPVIGGAGSNSTREAIWLAKEVEKAGAEAAMLVTPYYNKPNAEGLYQHYKAVASEVSIPIIVYNVPSRTGINTTPELVRRLAEIDNIFGIKEASGNLKQISEIIRTTPDDFVLLSGDDFLTLPILCLGGKGVISVAANVAPHLMKEMYEAFVEGNIERAREMHHRLTPLFDVLFIDTNPIPVKKALQLMGLAAGKPRLPLVELSEEKTQKVKEVLKSLELIS.

Thr44 contacts pyruvate. Tyr130 acts as the Proton donor/acceptor in catalysis. Catalysis depends on Lys158, which acts as the Schiff-base intermediate with substrate. Ile200 lines the pyruvate pocket.

The protein belongs to the DapA family. In terms of assembly, homotetramer; dimer of dimers.

The protein resides in the cytoplasm. The catalysed reaction is L-aspartate 4-semialdehyde + pyruvate = (2S,4S)-4-hydroxy-2,3,4,5-tetrahydrodipicolinate + H2O + H(+). It functions in the pathway amino-acid biosynthesis; L-lysine biosynthesis via DAP pathway; (S)-tetrahydrodipicolinate from L-aspartate: step 3/4. Catalyzes the condensation of (S)-aspartate-beta-semialdehyde [(S)-ASA] and pyruvate to 4-hydroxy-tetrahydrodipicolinate (HTPA). The chain is 4-hydroxy-tetrahydrodipicolinate synthase from Archaeoglobus fulgidus (strain ATCC 49558 / DSM 4304 / JCM 9628 / NBRC 100126 / VC-16).